The primary structure comprises 378 residues: 4-hydroxy-3-methylbut-2-en-1-yl diphosphate synthase (flavodoxin) (378 aa).

Cysteine 268, cysteine 271, cysteine 303, and glutamate 310 together coordinate [4Fe-4S] cluster. Residues 359–378 (AEREKEKEKEKEKEKETQEQ) form a disordered region.

This sequence belongs to the IspG family. Requires [4Fe-4S] cluster as cofactor.

It catalyses the reaction (2E)-4-hydroxy-3-methylbut-2-enyl diphosphate + oxidized [flavodoxin] + H2O + 2 H(+) = 2-C-methyl-D-erythritol 2,4-cyclic diphosphate + reduced [flavodoxin]. It participates in isoprenoid biosynthesis; isopentenyl diphosphate biosynthesis via DXP pathway; isopentenyl diphosphate from 1-deoxy-D-xylulose 5-phosphate: step 5/6. In terms of biological role, converts 2C-methyl-D-erythritol 2,4-cyclodiphosphate (ME-2,4cPP) into 1-hydroxy-2-methyl-2-(E)-butenyl 4-diphosphate. The polypeptide is 4-hydroxy-3-methylbut-2-en-1-yl diphosphate synthase (flavodoxin) (Bacillus cereus (strain ZK / E33L)).